Here is a 155-residue protein sequence, read N- to C-terminus: Protein-export protein SecB (155 aa).

Belongs to the SecB family. As to quaternary structure, homotetramer, a dimer of dimers. One homotetramer interacts with 1 SecA dimer.

It localises to the cytoplasm. One of the proteins required for the normal export of preproteins out of the cell cytoplasm. It is a molecular chaperone that binds to a subset of precursor proteins, maintaining them in a translocation-competent state. It also specifically binds to its receptor SecA. The chain is Protein-export protein SecB from Escherichia coli O139:H28 (strain E24377A / ETEC).